We begin with the raw amino-acid sequence, 446 residues long: Transcription factor Dp-2 (446 aa).

Residue T2 is modified to N-acetylthreonine. S24 and S42 each carry phosphoserine; by CDK2. Residues 60 to 82 (PQMIISTPQRIANSGSVLIGNPY) are interaction with CEBPA. The Nuclear localization signal motif lies at 103-118 (SDRKRAREFIDSDFSE). S122 bears the Phosphoserine mark. The DNA-binding element occupies 129-210 (GKGLRHFSMK…PTGKKRNQVD (82 aa)). The short motif at 176–210 (DQENIRRRVYDALNVLMAMNIISSLPTGKKRNQVD) is the DEF box element. Residues 219 to 292 (NLEIEKQRRI…RKTVIDCSIS (74 aa)) are dimerization. The segment at 229–261 (ERIKQKRAQLQELLLQQIAFKNLVQRNRQNEQQ) is DCB1. The segment at 274–330 (LPFIIINTSRKTVIDCSISSDKFEYLFNFDNTFEIHDDIEVLKRMGMSFGLESGKCS) is DCB2. The disordered stretch occupies residues 404–446 (LPASNSHQSSSAASHFSESRGETPCSFNDEDEEDEEEDPSSPE). The segment covering 406 to 419 (ASNSHQSSSAASHF) has biased composition (low complexity). Over residues 431-446 (NDEDEEDEEEDPSSPE) the composition is skewed to acidic residues.

It belongs to the E2F/DP family. As to quaternary structure, component of the DRTF1/E2F transcription factor complex. Forms heterodimers with E2F family members. The complex can interact with hypophosphorylated retinoblastoma protein RB1 and related proteins (RBL1 and RBL2) that inhibit the E2F transactivation domain. During the cell cycle, RB becomes phosphorylated in mid-to-late G1 phase, detaches from the DRTF1/E2F complex rendering E2F transcriptionally active. Interacts with GMCL. Component of the DREAM complex (also named LINC complex) at least composed of E2F4, E2F5, LIN9, LIN37, LIN52, LIN54, MYBL1, MYBL2, RBL1, RBL2, RBBP4, TFDP1 and TFDP2. The complex exists in quiescent cells where it represses cell cycle-dependent genes. It dissociates in S phase when LIN9, LIN37, LIN52 and LIN54 form a subcomplex that binds to MYBL2. The complex TFDP2:E2F1 interacts with CEBPA; the interaction prevents CEBPA binding to target gene promoters and represses its transcriptional activity. Phosphorylation by E2F1-bound cyclin A-CDK2, in the S phase, inhibits E2F-mediated DNA binding and transactivation. As to expression, expressed in all tissues examined. Highest levels in spleen and heart.

It is found in the nucleus. Its function is as follows. Can stimulate E2F-dependent transcription. Binds DNA cooperatively with E2F family members through the E2 recognition site, 5'-TTTC[CG]CGC-3', found in the promoter region of a number of genes whose products are involved in cell cycle regulation or in DNA replication. The TFDP2:E2F complex functions in the control of cell-cycle progression from G1 to S phase. The E2F1:DP complex appears to mediate both cell proliferation and apoptosis. Blocks adipocyte differentiation by repressing CEBPA binding to its target gene promoters. This Mus musculus (Mouse) protein is Transcription factor Dp-2 (Tfdp2).